The primary structure comprises 302 residues: Citrate lyase subunit beta (302 aa).

Residues Arg-76 and Glu-139 each coordinate substrate. Residues Glu-139 and Asp-166 each coordinate Mg(2+).

It belongs to the HpcH/HpaI aldolase family. Citrate lyase beta subunit subfamily. As to quaternary structure, oligomer with a subunit composition of (alpha,beta,gamma)6. Requires Mg(2+) as cofactor.

It localises to the cytoplasm. It carries out the reaction citrate = oxaloacetate + acetate. The catalysed reaction is (3S)-citryl-CoA = oxaloacetate + acetyl-CoA. Represents a citryl-ACP lyase. This is Citrate lyase subunit beta (citE) from Escherichia coli O6:H1 (strain CFT073 / ATCC 700928 / UPEC).